The primary structure comprises 213 residues: N-(5'-phosphoribosyl)anthranilate isomerase (213 aa).

It belongs to the TrpF family.

The enzyme catalyses N-(5-phospho-beta-D-ribosyl)anthranilate = 1-(2-carboxyphenylamino)-1-deoxy-D-ribulose 5-phosphate. It functions in the pathway amino-acid biosynthesis; L-tryptophan biosynthesis; L-tryptophan from chorismate: step 3/5. In Roseiflexus sp. (strain RS-1), this protein is N-(5'-phosphoribosyl)anthranilate isomerase.